A 225-amino-acid chain; its full sequence is Cyclin-dependent kinase inhibitor 3 (225 aa).

2 disordered regions span residues 47-94 (AAAA…QRRR) and 130-169 (ERKSLKPNSCSREVAAEHAGEHKHNPAAAAAAGRRPPLSP). Residues 55–67 (CRRRHRRGGRRGC) show a composition bias toward basic residues. Residues 71–82 (GAGSARACGARS) are compositionally biased toward low complexity. Over residues 143–153 (VAAEHAGEHKH) the composition is skewed to basic and acidic residues.

The protein belongs to the CDI family. ICK/KRP subfamily.

The chain is Cyclin-dependent kinase inhibitor 3 (KRP3) from Oryza sativa subsp. japonica (Rice).